Consider the following 401-residue polypeptide: Probable tRNA sulfurtransferase (401 aa).

Residues 60 to 165 (EAVMARLKHV…EDATYLTFRD (106 aa)) enclose the THUMP domain. ATP contacts are provided by residues 183-184 (MI), 208-209 (HF), arginine 265, glycine 287, and glutamine 296.

The protein belongs to the ThiI family.

It is found in the cytoplasm. The enzyme catalyses [ThiI sulfur-carrier protein]-S-sulfanyl-L-cysteine + a uridine in tRNA + 2 reduced [2Fe-2S]-[ferredoxin] + ATP + H(+) = [ThiI sulfur-carrier protein]-L-cysteine + a 4-thiouridine in tRNA + 2 oxidized [2Fe-2S]-[ferredoxin] + AMP + diphosphate. It catalyses the reaction [ThiS sulfur-carrier protein]-C-terminal Gly-Gly-AMP + S-sulfanyl-L-cysteinyl-[cysteine desulfurase] + AH2 = [ThiS sulfur-carrier protein]-C-terminal-Gly-aminoethanethioate + L-cysteinyl-[cysteine desulfurase] + A + AMP + 2 H(+). It participates in cofactor biosynthesis; thiamine diphosphate biosynthesis. In terms of biological role, catalyzes the ATP-dependent transfer of a sulfur to tRNA to produce 4-thiouridine in position 8 of tRNAs, which functions as a near-UV photosensor. Also catalyzes the transfer of sulfur to the sulfur carrier protein ThiS, forming ThiS-thiocarboxylate. This is a step in the synthesis of thiazole, in the thiamine biosynthesis pathway. The sulfur is donated as persulfide by IscS. The polypeptide is Probable tRNA sulfurtransferase (Bacillus licheniformis (strain ATCC 14580 / DSM 13 / JCM 2505 / CCUG 7422 / NBRC 12200 / NCIMB 9375 / NCTC 10341 / NRRL NRS-1264 / Gibson 46)).